We begin with the raw amino-acid sequence, 635 residues long: Glutamine--fructose-6-phosphate aminotransferase [isomerizing] (635 aa).

The Nucleophile; for GATase activity role is filled by C2. The Glutamine amidotransferase type-2 domain maps to C2–D218. SIS domains follow at residues F299–I439 and C472–P625. The active-site For Fru-6P isomerization activity is the K630.

Homodimer.

It is found in the cytoplasm. The enzyme catalyses D-fructose 6-phosphate + L-glutamine = D-glucosamine 6-phosphate + L-glutamate. In terms of biological role, catalyzes the first step in hexosamine metabolism, converting fructose-6P into glucosamine-6P using glutamine as a nitrogen source. In Treponema pallidum (strain Nichols), this protein is Glutamine--fructose-6-phosphate aminotransferase [isomerizing].